Here is a 176-residue protein sequence, read N- to C-terminus: Flavodoxin 1 (176 aa).

A Flavodoxin-like domain is found at 4 to 165 (HGIFFGSDTG…RVEKWVKQIS (162 aa)).

This sequence belongs to the flavodoxin family. Requires FMN as cofactor.

Its function is as follows. Low-potential electron donor to a number of redox enzymes. This Shigella flexneri protein is Flavodoxin 1 (fldA).